The chain runs to 317 residues: Ret finger protein-like 1 (317 aa).

The RING-type zinc-finger motif lies at 40–82 (CPVCSDYLEKPMSLECGCAVCFKCINSLQKEPHGEDLLCCCCS). The 195-residue stretch at 107 to 301 (EPKLKKILQM…DKSVLSICPV (195 aa)) folds into the B30.2/SPRY domain.

Phosphorylated by PKC and CDK1. The antiproliferative effect seems to be positively regulated by PKC phosphorylation and negatively by CDK1 phosphorylation. Seems to be expressed in prostate and less abundantly in adult brain, fetal liver, and fetal kidney.

The protein resides in the cytoplasm. It is found in the nucleus. Its function is as follows. Negatively regulates the G2-M phase transition, possibly by promoting cyclin B1/CCNB1 and CDK1 proteasomal degradation and thereby preventing their accumulation during interphase. The protein is Ret finger protein-like 1 (RFPL1) of Homo sapiens (Human).